The primary structure comprises 242 residues: Phosphoribosylaminoimidazole-succinocarboxamide synthase (242 aa).

It belongs to the SAICAR synthetase family.

It carries out the reaction 5-amino-1-(5-phospho-D-ribosyl)imidazole-4-carboxylate + L-aspartate + ATP = (2S)-2-[5-amino-1-(5-phospho-beta-D-ribosyl)imidazole-4-carboxamido]succinate + ADP + phosphate + 2 H(+). It functions in the pathway purine metabolism; IMP biosynthesis via de novo pathway; 5-amino-1-(5-phospho-D-ribosyl)imidazole-4-carboxamide from 5-amino-1-(5-phospho-D-ribosyl)imidazole-4-carboxylate: step 1/2. The chain is Phosphoribosylaminoimidazole-succinocarboxamide synthase from Prochlorococcus marinus subsp. pastoris (strain CCMP1986 / NIES-2087 / MED4).